The following is a 138-amino-acid chain: Regulator of ribonuclease activity B (138 aa).

A disordered region spans residues 111–138 (WGTYFEDPNGEEGDDDDYVDEDDDGVRH). Acidic residues predominate over residues 118 to 138 (PNGEEGDDDDYVDEDDDGVRH).

It belongs to the RraB family. As to quaternary structure, interacts with the C-terminal region of Rne.

It localises to the cytoplasm. Its function is as follows. Globally modulates RNA abundance by binding to RNase E (Rne) and regulating its endonucleolytic activity. Can modulate Rne action in a substrate-dependent manner by altering the composition of the degradosome. The polypeptide is Regulator of ribonuclease activity B (Salmonella typhi).